The chain runs to 254 residues: Short-chain dehydrogenase srdF (254 aa).

The NADP(+) site is built by isoleucine 18, serine 37, glutamate 67, asparagine 95, tyrosine 167, lysine 171, valine 199, and threonine 201. The active-site Proton donor is tyrosine 167. Catalysis depends on lysine 171, which acts as the Lowers pKa of active site Tyr.

The protein belongs to the short-chain dehydrogenases/reductases (SDR) family.

Short-chain dehydrogenase; part of the gene cluster that mediates the biosynthesis of sordarial, a salicylic aldehyde structurally related to the phytotoxin pyriculol. The most interesting aspect of this pathway is formation of an aromatic product from the highly reducing polyketide synthase srdA. SrdA synthesizes a reduced polyketide chain from one molecule of acetyl-CoA and five molecules of malonyl-CoA. The polyketide chain is then reductively released as an aldehyde. The oxidoreductases srdC, srdD and srdE then oxidize one of the hydroxy groups to facilitate the intramolecular aldol condensation, followed by dehydration to yield a salicylic aldehyde. This aldehyde can undergo facile reduction by endogenous reductases to yield the alcohol 1-hydroxy-2-hydroxymethyl-3-pent-1,3-dienylbenzene. The flavin-dependent srdI counteract against the propensity of the aldehydes to be reduced under physiological conditions and is responsible for reoxidizing 1-hydroxy-2-hydroxymethyl-3-pent-1,3-dienylbenzene back to the salicylic aldehyde. This salicylic aldehyde is then selectively epoxidized by the cupin-domain-containing oxidoreductase srdB to yield the epoxide, which can be hydrolyzed stereoselectively by the hydrolase srdG to give the final product sordarial. The polypeptide is Short-chain dehydrogenase srdF (Neurospora crassa (strain ATCC 24698 / 74-OR23-1A / CBS 708.71 / DSM 1257 / FGSC 987)).